Reading from the N-terminus, the 92-residue chain is Small ribosomal subunit protein bS20 (92 aa).

The span at 1 to 11 (MANIKSQKKRI) shows a compositional bias: basic residues. The disordered stretch occupies residues 1–22 (MANIKSQKKRIRQNEKARLRNK).

The protein belongs to the bacterial ribosomal protein bS20 family.

Binds directly to 16S ribosomal RNA. In Thermobifida fusca (strain YX), this protein is Small ribosomal subunit protein bS20.